The primary structure comprises 203 residues: Outer-membrane lipoprotein LolB (203 aa).

A signal peptide spans 1 to 22 (MPVNLNHTLLLCLLVAASLLSG). The N-palmitoyl cysteine moiety is linked to residue cysteine 23. Cysteine 23 is lipidated: S-diacylglycerol cysteine.

Belongs to the LolB family. As to quaternary structure, monomer.

The protein resides in the cell outer membrane. Functionally, plays a critical role in the incorporation of lipoproteins in the outer membrane after they are released by the LolA protein. The polypeptide is Outer-membrane lipoprotein LolB (Shewanella denitrificans (strain OS217 / ATCC BAA-1090 / DSM 15013)).